Here is a 211-residue protein sequence, read N- to C-terminus: Ribonuclease HII (211 aa).

An RNase H type-2 domain is found at 16 to 205; the sequence is APVCGVDEAG…VKAALAAAAV (190 aa). 3 residues coordinate a divalent metal cation: Asp-22, Glu-23, and Asp-114.

This sequence belongs to the RNase HII family. Requires Mn(2+) as cofactor. It depends on Mg(2+) as a cofactor.

Its subcellular location is the cytoplasm. It catalyses the reaction Endonucleolytic cleavage to 5'-phosphomonoester.. In terms of biological role, endonuclease that specifically degrades the RNA of RNA-DNA hybrids. This is Ribonuclease HII (rnhB) from Caulobacter vibrioides (strain ATCC 19089 / CIP 103742 / CB 15) (Caulobacter crescentus).